The primary structure comprises 343 residues: MSGPPSHEIGMLYSLAPSVDMKSENIEDLPSESIPTTNHCASNYFYAPECPDIGHLRALSIMNRWTETEFVISDDLRDVSMLTEEERYFYRFLFTFLSAADDLVNLNIDNLLGLFSQKDIHHYYFEQECIEAVHSRAYSIIQLMLFDNDSLARAEYVKTSLNSPAIQSKLDWLNKRVIECSSIAEKYILMILIEGIFFSASFAAIAYLRINNLFVVTCQINNLISRDEAIHVEASCCIFKNYLMGPKPSIGRVQELFKEAVQIECAFLRTAAPRNSQLLDVEAICSYVRYSADRLLKELDMPPIYNEPKPTADFPLALMTASNNTNFFERRNTAYSGSVSNDL.

3 residues coordinate Fe cation: D101, E131, and H134. Residue Y138 is part of the active site. A helical transmembrane segment spans residues 188 to 208; it reads ILMILIEGIFFSASFAAIAYL. Residues E194, E228, and H231 each coordinate Fe cation.

This sequence belongs to the ribonucleoside diphosphate reductase small chain family. In terms of assembly, heterotetramer composed of a homodimer of the large subunit (R1) and a homodimer of the small subunit (R2). Larger multisubunit protein complex are also active, composed of (R1)n(R2)n. Requires Fe cation as cofactor.

The protein localises to the host membrane. It carries out the reaction a 2'-deoxyribonucleoside 5'-diphosphate + [thioredoxin]-disulfide + H2O = a ribonucleoside 5'-diphosphate + [thioredoxin]-dithiol. Its function is as follows. Ribonucleoside-diphosphate reductase holoenzyme provides the precursors necessary for viral DNA synthesis. Allows virus growth in non-dividing cells, as well as reactivation from latency in infected hosts. Catalyzes the biosynthesis of deoxyribonucleotides from the corresponding ribonucleotides. This chain is Ribonucleoside-diphosphate reductase small subunit, found in Gallid herpesvirus 2 (strain Chicken/Md5/ATCC VR-987) (GaHV-2).